The sequence spans 310 residues: Protein TIFY 6A (310 aa).

The Tify domain maps to 141–176 (SKPLPPQLTIFYAGSVLVYQDIAPEKAQAIMLLAGN). The short motif at 259-284 (PQTRKASLARFLEKRKERVINVSPYY) is the Jas element. Positions 261-268 (TRKASLAR) match the Nuclear localization signal motif.

Belongs to the TIFY/JAZ family. In terms of assembly, homo- and heterodimer. Interacts with MYC2, AFPH2/NINJA, TIFY10A/JAZ1, TIFY6B/JAZ3, TIFY5A/JAZ8, TIFY9/JAZ10 and TIFY3A/JAZ11. Interacts with RHD6 and RSL1. Ubiquitinated. Targeted for degradation by the SCF(COI1) E3 ubiquitin ligase-proteasome pathway during jasmonate signaling.

It localises to the nucleus. In terms of biological role, repressor of jasmonate responses. Interacts with and suppresses RHD6 and RSL1 transcription factor activities to negatively regulate jasmonate-stimulated root hair development. The chain is Protein TIFY 6A (TIFY6A) from Arabidopsis thaliana (Mouse-ear cress).